A 568-amino-acid polypeptide reads, in one-letter code: Lariat debranching enzyme (568 aa).

A divalent metal cation contacts are provided by Cys8, His10, Asp39, and Asn84. Residues 124 to 154 are lariat recognition loop; it reads SGIFKSHDFKKGHFEFPPYNPETLRSVYHIR. His174, His226, and His228 together coordinate a divalent metal cation. Residues 388-568 form a disordered region; the sequence is IYGERGGKGA…TAVEDEESDS (181 aa). Residues 417 to 428 are compositionally biased toward polar residues; the sequence is PSDTSGLSSSYN. Acidic residues predominate over residues 432–444; that stretch reads ITIEDEWEEEEDG. Basic and acidic residues predominate over residues 467–480; it reads DSDRDSSPQRETAK. Thr478 carries the post-translational modification Phosphothreonine. The span at 534–549 shows a compositional bias: low complexity; sequence GETTQSSAGQTGGTPQ. Ser568 carries the phosphoserine modification.

This sequence belongs to the lariat debranching enzyme family. The cofactor is Fe(2+). It depends on Zn(2+) as a cofactor. Mn(2+) is required as a cofactor.

Its subcellular location is the nucleus. Its activity is regulated as follows. Active in presence of diverse metals including Fe(2+), Zn(2+), Mn(2+). Also activated by Ca(2+). Binds two metal cations in two adjacent alpha and beta metal-binding pockets. Functionally, cleaves the 2'-5' phosphodiester linkage at the branch point of excised lariat intron RNA and converts them into linear molecules that can be subsequently degraded, thereby facilitating ribonucleotide turnover. Linked to its role in pre-mRNA processing mechanism, may also participate in retrovirus replication and have an antiviral cell-intrinsic defense function. The polypeptide is Lariat debranching enzyme (dbr1) (Danio rerio (Zebrafish)).